The primary structure comprises 394 residues: Lipoyl synthase, chloroplastic (394 aa).

The N-terminal 36 residues, 1 to 36, are a transit peptide targeting the chloroplast; the sequence is MMHHCSITKPTFSISISTQKLHHHSSKFLNLGFRIR. [4Fe-4S] cluster is bound by residues Cys127, Cys132, Cys138, Cys158, Cys162, Cys165, and Ser373. Residues 141 to 362 enclose the Radical SAM core domain; the sequence is GGGDGVATAT…KTYGESIGFR (222 aa).

Belongs to the radical SAM superfamily. Lipoyl synthase family. [4Fe-4S] cluster is required as a cofactor. Expressed in roots, leaves and flowers.

The protein localises to the plastid. It localises to the chloroplast. It carries out the reaction [[Fe-S] cluster scaffold protein carrying a second [4Fe-4S](2+) cluster] + N(6)-octanoyl-L-lysyl-[protein] + 2 oxidized [2Fe-2S]-[ferredoxin] + 2 S-adenosyl-L-methionine + 4 H(+) = [[Fe-S] cluster scaffold protein] + N(6)-[(R)-dihydrolipoyl]-L-lysyl-[protein] + 4 Fe(3+) + 2 hydrogen sulfide + 2 5'-deoxyadenosine + 2 L-methionine + 2 reduced [2Fe-2S]-[ferredoxin]. Its pathway is protein modification; protein lipoylation via endogenous pathway; protein N(6)-(lipoyl)lysine from octanoyl-[acyl-carrier-protein]: step 2/2. Catalyzes the radical-mediated insertion of two sulfur atoms into the C-6 and C-8 positions of the octanoyl moiety bound to the lipoyl domains of lipoate-dependent enzymes, thereby converting the octanoylated domains into lipoylated derivatives. Together with LIP2P and LIP2P2 is essential for de novo plastidial protein lipoylation during seed development. In Arabidopsis thaliana (Mouse-ear cress), this protein is Lipoyl synthase, chloroplastic.